The sequence spans 1332 residues: Sister chromatid cohesion protein PDS5 homolog A (1332 aa).

N-acetylmethionine is present on M1. Residues A392–Y428 form an HEAT repeat. S1096 carries the post-translational modification Phosphoserine. Residues G1138–R1332 are disordered. At K1145 the chain carries N6-acetyllysine. Polar residues predominate over residues G1160 to L1173. Phosphoserine is present on residues S1174 and S1194. Residue T1207 is modified to Phosphothreonine. K1210 bears the N6-acetyllysine mark. The segment covering S1222 to S1232 has biased composition (polar residues). The residue at position 1288 (K1288) is an N6-acetyllysine. S1303 carries the post-translational modification Phosphoserine. Positions D1316–R1332 are enriched in basic and acidic residues.

It belongs to the PDS5 family. Interacts with the cohesin complex. Interacts with WAPL (via FGF motifs) or CDCA5 (via the FGF motif); the interaction is direct, cohesin-dependent and competitive. Interacts with SMC3. Interacts with TP63.

The protein resides in the nucleus. In terms of biological role, probable regulator of sister chromatid cohesion in mitosis which may stabilize cohesin complex association with chromatin. May couple sister chromatid cohesion during mitosis to DNA replication. Cohesion ensures that chromosome partitioning is accurate in both meiotic and mitotic cells and plays an important role in DNA repair. This chain is Sister chromatid cohesion protein PDS5 homolog A (Pds5a), found in Mus musculus (Mouse).